The primary structure comprises 70 residues: uncharacterized protein (70 aa).

This is an uncharacterized protein from Acidianus convivator (ATV).